We begin with the raw amino-acid sequence, 61 residues long: uncharacterized protein (61 aa).

This is an uncharacterized protein from Methanocaldococcus jannaschii (strain ATCC 43067 / DSM 2661 / JAL-1 / JCM 10045 / NBRC 100440) (Methanococcus jannaschii).